The following is a 280-amino-acid chain: Cell division protein SepF (280 aa).

Residues 22–117 form a disordered region; the sequence is DYVDDRAPRA…DDYPEDAYGE (96 aa). 2 stretches are compositionally biased toward basic and acidic residues: residues 25-36 and 53-83; these read DDRAPRASERGG and RYGEDRYSADRFGPERFGAERFGPDRFGADR.

The protein belongs to the SepF family. Homodimer. Interacts with FtsZ.

It is found in the cytoplasm. In terms of biological role, cell division protein that is part of the divisome complex and is recruited early to the Z-ring. Probably stimulates Z-ring formation, perhaps through the cross-linking of FtsZ protofilaments. Its function overlaps with FtsA. This chain is Cell division protein SepF, found in Nocardia farcinica (strain IFM 10152).